A 493-amino-acid polypeptide reads, in one-letter code: Probable cytosol aminopeptidase (493 aa).

Mn(2+) contacts are provided by Lys-257 and Asp-262. Residue Lys-269 is part of the active site. Residues Asp-280, Asp-339, and Glu-341 each coordinate Mn(2+). Arg-343 is a catalytic residue.

Belongs to the peptidase M17 family. Requires Mn(2+) as cofactor.

Its subcellular location is the cytoplasm. The enzyme catalyses Release of an N-terminal amino acid, Xaa-|-Yaa-, in which Xaa is preferably Leu, but may be other amino acids including Pro although not Arg or Lys, and Yaa may be Pro. Amino acid amides and methyl esters are also readily hydrolyzed, but rates on arylamides are exceedingly low.. It catalyses the reaction Release of an N-terminal amino acid, preferentially leucine, but not glutamic or aspartic acids.. Presumably involved in the processing and regular turnover of intracellular proteins. Catalyzes the removal of unsubstituted N-terminal amino acids from various peptides. The sequence is that of Probable cytosol aminopeptidase (pepA) from Aquifex aeolicus (strain VF5).